Reading from the N-terminus, the 132-residue chain is UPF0251 protein PTH_0588 (132 aa).

This sequence belongs to the UPF0251 family.

The protein is UPF0251 protein PTH_0588 of Pelotomaculum thermopropionicum (strain DSM 13744 / JCM 10971 / SI).